A 243-amino-acid polypeptide reads, in one-letter code: Pyridoxine 5'-phosphate synthase (243 aa).

Asn9 contributes to the 3-amino-2-oxopropyl phosphate binding site. A 1-deoxy-D-xylulose 5-phosphate-binding site is contributed by 11-12 (DH). Position 20 (Arg20) interacts with 3-amino-2-oxopropyl phosphate. His45 acts as the Proton acceptor in catalysis. 1-deoxy-D-xylulose 5-phosphate is bound by residues Arg47 and His52. Glu72 (proton acceptor) is an active-site residue. Position 102 (Thr102) interacts with 1-deoxy-D-xylulose 5-phosphate. His193 (proton donor) is an active-site residue. Residues Gly194 and 215–216 (GH) contribute to the 3-amino-2-oxopropyl phosphate site.

The protein belongs to the PNP synthase family. Homooctamer; tetramer of dimers.

The protein localises to the cytoplasm. It catalyses the reaction 3-amino-2-oxopropyl phosphate + 1-deoxy-D-xylulose 5-phosphate = pyridoxine 5'-phosphate + phosphate + 2 H2O + H(+). The protein operates within cofactor biosynthesis; pyridoxine 5'-phosphate biosynthesis; pyridoxine 5'-phosphate from D-erythrose 4-phosphate: step 5/5. Functionally, catalyzes the complicated ring closure reaction between the two acyclic compounds 1-deoxy-D-xylulose-5-phosphate (DXP) and 3-amino-2-oxopropyl phosphate (1-amino-acetone-3-phosphate or AAP) to form pyridoxine 5'-phosphate (PNP) and inorganic phosphate. This is Pyridoxine 5'-phosphate synthase from Salmonella paratyphi A (strain ATCC 9150 / SARB42).